A 413-amino-acid polypeptide reads, in one-letter code: NPL4-like protein 1 (413 aa).

Ser-104 carries the post-translational modification Phosphoserine. In terms of domain architecture, MPN spans 131–272; that stretch reads SVSFDRDCAN…ADVHFEPFQM (142 aa).

Belongs to the NPL4 family.

It participates in protein degradation; proteasomal ubiquitin-dependent pathway. Its function is as follows. May be part of a complex that binds ubiquitinated proteins and that is necessary for the export of misfolded proteins from the ER to the cytoplasm, where they are degraded by the proteasome. The sequence is that of NPL4-like protein 1 from Arabidopsis thaliana (Mouse-ear cress).